Here is a 334-residue protein sequence, read N- to C-terminus: Aspartate carbamoyltransferase catalytic subunit (334 aa).

The carbamoyl phosphate site is built by R71 and T72. K99 contributes to the L-aspartate binding site. Carbamoyl phosphate-binding residues include R121, H151, and Q154. R184 and R239 together coordinate L-aspartate. Carbamoyl phosphate is bound by residues G280 and P281.

The protein belongs to the aspartate/ornithine carbamoyltransferase superfamily. ATCase family. Heterododecamer (2C3:3R2) of six catalytic PyrB chains organized as two trimers (C3), and six regulatory PyrI chains organized as three dimers (R2).

The enzyme catalyses carbamoyl phosphate + L-aspartate = N-carbamoyl-L-aspartate + phosphate + H(+). Its pathway is pyrimidine metabolism; UMP biosynthesis via de novo pathway; (S)-dihydroorotate from bicarbonate: step 2/3. Catalyzes the condensation of carbamoyl phosphate and aspartate to form carbamoyl aspartate and inorganic phosphate, the committed step in the de novo pyrimidine nucleotide biosynthesis pathway. The sequence is that of Aspartate carbamoyltransferase catalytic subunit from Pseudomonas putida (strain GB-1).